We begin with the raw amino-acid sequence, 439 residues long: 5-methylthioadenosine/S-adenosylhomocysteine deaminase (439 aa).

Zn(2+)-binding residues include histidine 70 and histidine 72. Positions 99 and 192 each coordinate substrate. A Zn(2+)-binding site is contributed by histidine 219. Substrate-binding residues include glutamate 222 and aspartate 307. Aspartate 307 is a Zn(2+) binding site.

The protein belongs to the metallo-dependent hydrolases superfamily. MTA/SAH deaminase family. Requires Zn(2+) as cofactor.

It carries out the reaction S-adenosyl-L-homocysteine + H2O + H(+) = S-inosyl-L-homocysteine + NH4(+). It catalyses the reaction S-methyl-5'-thioadenosine + H2O + H(+) = S-methyl-5'-thioinosine + NH4(+). Functionally, catalyzes the deamination of 5-methylthioadenosine and S-adenosyl-L-homocysteine into 5-methylthioinosine and S-inosyl-L-homocysteine, respectively. Is also able to deaminate adenosine. The chain is 5-methylthioadenosine/S-adenosylhomocysteine deaminase from Thermodesulfovibrio yellowstonii (strain ATCC 51303 / DSM 11347 / YP87).